A 256-amino-acid chain; its full sequence is Hypodermin-B (256 aa).

The first 22 residues, 1 to 22 (MLKFVILVCSVACVFGAVVPGG), serve as a signal peptide directing secretion. Positions 23 to 30 (MLPQLDGR) are cleaved as a propeptide — activation peptide. The Peptidase S1 domain occupies 31-254 (IVGGFEADIE…VRSWITENAK (224 aa)). C56 and C72 are disulfide-bonded. Active-site charge relay system residues include H71 and D116. 2 disulfides stabilise this stretch: C180–C197 and C206–C230. S210 acts as the Charge relay system in catalysis.

It belongs to the peptidase S1 family.

The protein localises to the secreted. Its function is as follows. Protease that shows preferential cleavage after Arg and Lys residues. In Hypoderma lineatum (Early cattle grub), this protein is Hypodermin-B.